We begin with the raw amino-acid sequence, 574 residues long: Frizzled and smoothened-like protein G (574 aa).

Residues 1–19 (MKSIIFITFFIFFLKKLNG) form the signal peptide. The Extracellular segment spans residues 20-246 (LPNGYGVGLV…EKWNQIENLS (227 aa)). The FZ domain maps to 30 to 181 (DPNGQCMNYI…GLYEVPCFNP (152 aa)). Intrachain disulfides connect Cys-35–Cys-109, Cys-48–Cys-102, Cys-91–Cys-138, and Cys-127–Cys-178. Residues Asn-119, Asn-161, Asn-187, Asn-206, Asn-233, and Asn-244 are each glycosylated (N-linked (GlcNAc...) asparagine). The helical transmembrane segment at 247 to 267 (KVLSTISFVCSIYNILSFGIL) threads the bilayer. Residues 268-273 (KKKKTK) are Cytoplasmic-facing. The chain crosses the membrane as a helical span at residues 274–294 (YTICISALSASVALINLGDII). Residues 295–324 (KIGVGYEKVLCPEPGRFATQVDDPLCGLTA) are Extracellular-facing. Residues 325–345 (ALFHVGICSTVLWTTTMAIYL) traverse the membrane as a helical segment. The Cytoplasmic portion of the chain corresponds to 346–358 (YSAIKNIKLFKFR). A helical membrane pass occupies residues 359–379 (YFIIFNTGFSLTSLIIAASAS). Over 380-401 (KFEAGTGSIECWIRDRWYSICL) the chain is Extracellular. Residues 402–422 (FWLPCGICLLIGTICIASVIV) traverse the membrane as a helical segment. Topologically, residues 423 to 445 (EIYKVSKNIKLSESETIMRQIKP) are cytoplasmic. The helical transmembrane segment at 446 to 466 (IISVILVSGSFTYLFIIFFDI) threads the bilayer. Residues 467 to 502 (ERNFGGYRSAVTDYVLCLLNSTDNGIECHTSGPSYN) lie on the Extracellular side of the membrane. N-linked (GlcNAc...) asparagine glycosylation is present at Asn-486. A helical transmembrane segment spans residues 503-523 (PYFMFYFFMRFFGILFFLIYG). Residues 524–574 (TSKNARDSWYELFIKIKVSLSETSSTISNNSGGGSSQQKQQQQNEIKLEKI) lie on the Cytoplasmic side of the membrane. The segment covering 550–568 (ISNNSGGGSSQQKQQQQNE) has biased composition (low complexity). The interval 550-574 (ISNNSGGGSSQQKQQQQNEIKLEKI) is disordered.

Belongs to the G-protein coupled receptor Fz/Smo family.

It localises to the membrane. The sequence is that of Frizzled and smoothened-like protein G (fslG) from Dictyostelium discoideum (Social amoeba).